A 54-amino-acid chain; its full sequence is Ovomucoid (54 aa).

Residues 4–54 (VDCSEYPKPACTLEHRPLCGSDNKTYGNKCNFCNAVVESNGTLTLSHFGKC) enclose the Kazal-like domain. Cystine bridges form between Cys6–Cys36, Cys14–Cys33, and Cys22–Cys54. Asn43 carries N-linked (GlcNAc...) asparagine glycosylation.

The protein resides in the secreted. In Pavo muticus (Green peafowl), this protein is Ovomucoid.